The sequence spans 522 residues: F-box-like/WD repeat-containing protein TBL1XR1-B (522 aa).

Residues S4–Q36 form the LisH domain. Residues G41–A86 enclose the F-box-like domain. The tract at residues A122 to A150 is disordered. The span at T123–G141 shows a compositional bias: polar residues. WD repeat units follow at residues G175–S214, P231–L270, Q272–Q311, F314–T352, G355–D394, A397–T445, K448–S487, and R489–K522.

This sequence belongs to the WD repeat EBI family. In terms of assembly, interacts with heterodimers of rxra and thrb, and this interaction is abrogated by thyroid hormone binding to thrb. Interacts with ncor1.

Its subcellular location is the nucleus. F-box-like protein which acts as an integral component of the N-CoR transcriptional corepressor complex. Probably regulates transcription activation mediated by nuclear receptors. May mediate the recruitment of the 19S proteasome complex, leading to the subsequent proteasomal degradation of the N-CoR complex, thereby allowing cofactor exchange and transcription activation. The chain is F-box-like/WD repeat-containing protein TBL1XR1-B (tbl1xr1-b) from Xenopus laevis (African clawed frog).